We begin with the raw amino-acid sequence, 344 residues long: Putative voltage-gated potassium channel subunit beta (344 aa).

NADP(+) contacts are provided by Trp-33, Asp-62, Tyr-67, Ser-167, Gln-193, Trp-222, Ser-223, Pro-224, Leu-225, Lys-233, Arg-243, Gly-301, Ser-303, Gln-307, Glu-310, and Asn-311. The Proton donor/acceptor role is filled by Tyr-67.

This sequence belongs to the shaker potassium channel beta subunit family. As to quaternary structure, forms heteromultimeric complexes with potassium channel alpha subunits.

Its subcellular location is the cytoplasm. It localises to the nucleus. Its function is as follows. Probable accessory potassium channel protein which modulates the activity of the pore-forming alpha subunit. The sequence is that of Putative voltage-gated potassium channel subunit beta from Schizosaccharomyces pombe (strain 972 / ATCC 24843) (Fission yeast).